Here is a 440-residue protein sequence, read N- to C-terminus: Trigger factor (440 aa).

In terms of domain architecture, PPIase FKBP-type spans 163–248 (NDTVSINFKG…INSIKEKVLP (86 aa)).

It belongs to the FKBP-type PPIase family. Tig subfamily.

It is found in the cytoplasm. The enzyme catalyses [protein]-peptidylproline (omega=180) = [protein]-peptidylproline (omega=0). Functionally, involved in protein export. Acts as a chaperone by maintaining the newly synthesized protein in an open conformation. Functions as a peptidyl-prolyl cis-trans isomerase. This chain is Trigger factor, found in Finegoldia magna (strain ATCC 29328 / DSM 20472 / WAL 2508) (Peptostreptococcus magnus).